Here is a 368-residue protein sequence, read N- to C-terminus: 1-deoxy-D-xylulose 5-phosphate reductoisomerase (368 aa).

NADPH is bound by residues threonine 7, glycine 8, serine 9, isoleucine 10, glycine 31, lysine 32, asparagine 33, and asparagine 113. A 1-deoxy-D-xylulose 5-phosphate-binding site is contributed by lysine 114. Glutamate 115 serves as a coordination point for NADPH. Residue aspartate 133 participates in Mn(2+) binding. 1-deoxy-D-xylulose 5-phosphate contacts are provided by serine 134, glutamate 135, serine 158, and histidine 181. Residue glutamate 135 coordinates Mn(2+). Glycine 187 is a binding site for NADPH. Residues serine 194, asparagine 199, lysine 200, and glutamate 203 each coordinate 1-deoxy-D-xylulose 5-phosphate. Residue glutamate 203 participates in Mn(2+) binding.

This sequence belongs to the DXR family. It depends on Mg(2+) as a cofactor. Mn(2+) is required as a cofactor.

The catalysed reaction is 2-C-methyl-D-erythritol 4-phosphate + NADP(+) = 1-deoxy-D-xylulose 5-phosphate + NADPH + H(+). Its pathway is isoprenoid biosynthesis; isopentenyl diphosphate biosynthesis via DXP pathway; isopentenyl diphosphate from 1-deoxy-D-xylulose 5-phosphate: step 1/6. Functionally, catalyzes the NADPH-dependent rearrangement and reduction of 1-deoxy-D-xylulose-5-phosphate (DXP) to 2-C-methyl-D-erythritol 4-phosphate (MEP). This is 1-deoxy-D-xylulose 5-phosphate reductoisomerase from Helicobacter pylori (strain ATCC 700392 / 26695) (Campylobacter pylori).